Here is a 183-residue protein sequence, read N- to C-terminus: MMIRAEDAGHGEEQTLLEWLAAQPGDPSFYAFLALLIFFGLLLHMGVHRTIAKTLDDRAEGISNELDEAKRLREDAAEMLASYQRKQREAEAEAEAIIAQAKTEAKSLKAEARKEMTERLERRTAMAEQRIAQAEAQAAADVKAAAAELAAQAAEEILKTQLKKSDLNKLVDADIKTVGQRLN.

A helical membrane pass occupies residues 27 to 47; that stretch reads PSFYAFLALLIFFGLLLHMGV.

Belongs to the ATPase B chain family. In terms of assembly, F-type ATPases have 2 components, F(1) - the catalytic core - and F(0) - the membrane proton channel. F(1) has five subunits: alpha(3), beta(3), gamma(1), delta(1), epsilon(1). F(0) has three main subunits: a(1), b(2) and c(10-14). The alpha and beta chains form an alternating ring which encloses part of the gamma chain. F(1) is attached to F(0) by a central stalk formed by the gamma and epsilon chains, while a peripheral stalk is formed by the delta and b chains.

It is found in the cell inner membrane. F(1)F(0) ATP synthase produces ATP from ADP in the presence of a proton or sodium gradient. F-type ATPases consist of two structural domains, F(1) containing the extramembraneous catalytic core and F(0) containing the membrane proton channel, linked together by a central stalk and a peripheral stalk. During catalysis, ATP synthesis in the catalytic domain of F(1) is coupled via a rotary mechanism of the central stalk subunits to proton translocation. Its function is as follows. Component of the F(0) channel, it forms part of the peripheral stalk, linking F(1) to F(0). The sequence is that of ATP synthase subunit b 2 from Maricaulis maris (strain MCS10) (Caulobacter maris).